We begin with the raw amino-acid sequence, 836 residues long: Protein PDC2 (836 aa).

Residues glutamate 64–glycine 139 enclose the HTH CENPB-type domain. Positions threonine 626–threonine 640 are enriched in low complexity. The interval threonine 626 to serine 732 is disordered. Residues glutamine 641–asparagine 651 are compositionally biased toward polar residues. The span at glycine 677–glutamine 698 shows a compositional bias: low complexity. Residues methionine 699–glutamate 711 show a composition bias toward polar residues.

Functionally, essential for the synthesis of pyruvate decarboxylase. The chain is Protein PDC2 (PDC2) from Candida albicans (Yeast).